The following is a 219-amino-acid chain: Orotate phosphoribosyltransferase (219 aa).

Lysine 26 provides a ligand contact to 5-phospho-alpha-D-ribose 1-diphosphate. 34–35 (FF) provides a ligand contact to orotate. 5-phospho-alpha-D-ribose 1-diphosphate is bound by residues 72 to 73 (YK), arginine 98, lysine 99, lysine 102, histidine 104, and 124 to 132 (DDVITAGTA). The orotate site is built by threonine 128 and arginine 156.

It belongs to the purine/pyrimidine phosphoribosyltransferase family. PyrE subfamily. Homodimer. The cofactor is Mg(2+).

The enzyme catalyses orotidine 5'-phosphate + diphosphate = orotate + 5-phospho-alpha-D-ribose 1-diphosphate. It functions in the pathway pyrimidine metabolism; UMP biosynthesis via de novo pathway; UMP from orotate: step 1/2. In terms of biological role, catalyzes the transfer of a ribosyl phosphate group from 5-phosphoribose 1-diphosphate to orotate, leading to the formation of orotidine monophosphate (OMP). The sequence is that of Orotate phosphoribosyltransferase from Xylella fastidiosa (strain M23).